The sequence spans 66 residues: Opicalcin-2 (66 aa).

The N-terminal stretch at 1–22 (MKPSLIIVTFIVVFMTISCVAA) is a signal peptide. The propeptide occupies 23–31 (DDEQETWIE). Disulfide bonds link Cys-36/Cys-50, Cys-43/Cys-54, and Cys-49/Cys-65. The essential for stimulation of [3H]ryanodine binding to RYR1 stretch occupies residues 55-57 (KRR).

This sequence belongs to the scorpion calcin family. In terms of tissue distribution, expressed by the venom gland.

Its subcellular location is the secreted. In terms of biological role, this toxin stabilizes ryanodine receptor 1 (RyR1) opening in a long-lasting subconductance state (40% of the full conductance state). Furthermore, it triggers calcium release from sarcoplasmic vesicles (64.2 nM are enough to induce a sharp release, and 50% of the total calcium is released after toxin (100 nM) addition) probably by acting as a cell-penetrating peptide (CPP). In addition, it has been shown to dose-dependently stimulate ryanodine binding to RyR1 (EC(50)=3.2 nM). It also augments the bell-shaped calcium-[3H]ryanodine binding curve that is maximal at about 10 uM calcium concentration. It binds a different site as ryanodine. It acts synergistically with caffeine. In vivo, intracerebroventricular injection into mice induces neurotoxic symptoms, followed by death. The chain is Opicalcin-2 from Opistophthalmus carinatus (African yellow leg scorpion).